The primary structure comprises 287 residues: Acetyl-coenzyme A carboxylase carboxyl transferase subunit beta (287 aa).

The 252-residue stretch at 36–287 (MWVKCDRCGK…KVLYKILELH (252 aa)) folds into the CoA carboxyltransferase N-terminal domain. The Zn(2+) site is built by Cys40, Cys43, Cys59, and Cys62. A C4-type zinc finger spans residues 40–62 (CDRCGKTLYKKDLDENLKVCKFC).

Belongs to the AccD/PCCB family. In terms of assembly, acetyl-CoA carboxylase is a heterohexamer composed of biotin carboxyl carrier protein (AccB), biotin carboxylase (AccC) and two subunits each of ACCase subunit alpha (AccA) and ACCase subunit beta (AccD). It depends on Zn(2+) as a cofactor.

It localises to the cytoplasm. It carries out the reaction N(6)-carboxybiotinyl-L-lysyl-[protein] + acetyl-CoA = N(6)-biotinyl-L-lysyl-[protein] + malonyl-CoA. It participates in lipid metabolism; malonyl-CoA biosynthesis; malonyl-CoA from acetyl-CoA: step 1/1. Its function is as follows. Component of the acetyl coenzyme A carboxylase (ACC) complex. Biotin carboxylase (BC) catalyzes the carboxylation of biotin on its carrier protein (BCCP) and then the CO(2) group is transferred by the transcarboxylase to acetyl-CoA to form malonyl-CoA. In Clostridium novyi (strain NT), this protein is Acetyl-coenzyme A carboxylase carboxyl transferase subunit beta.